The sequence spans 747 residues: Cysteine--tRNA ligase, cytoplasmic (747 aa).

A disordered region spans residues 1 to 25; sequence MTDSWERGKGRRTQPPWSAPNTQAQ. The span at 15–25 shows a compositional bias: polar residues; the sequence is PPWSAPNTQAQ. Cys54 is a Zn(2+) binding site. An L-cysteine-binding site is contributed by Gly55. The 'HIGH' region motif lies at 56–66; the sequence is PTVYDASHMGH. Thr95 contributes to the L-cysteine binding site. A 'KIIK' region motif is present at residues 100–103; sequence KIIK. Cys347, His372, and Glu376 together coordinate Zn(2+). L-cysteine is bound at residue His372. The 'KMSKS' region signature appears at 405–409; that stretch reads KMSKS. An ATP-binding site is contributed by Lys408. Positions 651–683 are enriched in basic and acidic residues; the sequence is EEKRKAEEEKQRKKEEAARKKQQQEAAKLEKMK. Positions 651–722 are disordered; it reads EEKRKAEEEK…KELSKGQSKK (72 aa).

Belongs to the class-I aminoacyl-tRNA synthetase family. In terms of assembly, homodimer. It depends on Zn(2+) as a cofactor.

Its subcellular location is the cytoplasm. It carries out the reaction tRNA(Cys) + L-cysteine + ATP = L-cysteinyl-tRNA(Cys) + AMP + diphosphate. Its function is as follows. Catalyzes the ATP-dependent ligation of cysteine to tRNA(Cys). This is Cysteine--tRNA ligase, cytoplasmic (cars1) from Xenopus tropicalis (Western clawed frog).